The following is a 475-amino-acid chain: MTGQQPASLPPELARVHMVGIGGAGMSGVARILLDRGGQVSGSDAKDSRGLIALRARGAQVRIGHDPSALDMLPGGPTAVVTTHAAIPKTNPELVEARRRGIPVILRPAVLARLMDDRTSLLVTGTHGKTSTTSMIIVALQHCGFDPSFAVGGDLGQAGTNAHHGSGSTFVAEADESDGSLLEYSPDVAVVTNIEADHLDFYGTVENYTAVFDQFVDRIKPVGALVVCVDDPGAAALAERTAALGIRVLRYGSAPGLDATLLDWSQLGTGAVAEISVRAEDRPRTMRLSVPGRHMALNALGALLAATQAGADIDAVLDGLAGFDGVRRRFELVGTAGGVRVFDDYAHHPTEVRAAITALRAVAEQTPGARTVAVFQPHLYSRTETFATEFAASLSTADEVFVLDVYAAREQPLPGVSGATIADGVSAPVTYIADFSAVAARVAAVVSAGDVVVTMGAGDVTMLGQEILAEVRARA.

ATP is bound at residue 125–131; sequence GTHGKTS.

It belongs to the MurCDEF family.

Its subcellular location is the cytoplasm. The enzyme catalyses UDP-N-acetyl-alpha-D-muramate + L-alanine + ATP = UDP-N-acetyl-alpha-D-muramoyl-L-alanine + ADP + phosphate + H(+). It functions in the pathway cell wall biogenesis; peptidoglycan biosynthesis. Its function is as follows. Cell wall formation. This Mycolicibacterium gilvum (strain PYR-GCK) (Mycobacterium gilvum (strain PYR-GCK)) protein is UDP-N-acetylmuramate--L-alanine ligase.